The following is a 421-amino-acid chain: UDP-N-acetylglucosamine 1-carboxyvinyltransferase (421 aa).

22-23 contacts phosphoenolpyruvate; it reads KN. Arg93 serves as a coordination point for UDP-N-acetyl-alpha-D-glucosamine. Residue Cys117 is the Proton donor of the active site. The residue at position 117 (Cys117) is a 2-(S-cysteinyl)pyruvic acid O-phosphothioketal. UDP-N-acetyl-alpha-D-glucosamine-binding positions include 122 to 126, Asp308, and Val330; that span reads RPVDL.

Belongs to the EPSP synthase family. MurA subfamily.

It localises to the cytoplasm. The enzyme catalyses phosphoenolpyruvate + UDP-N-acetyl-alpha-D-glucosamine = UDP-N-acetyl-3-O-(1-carboxyvinyl)-alpha-D-glucosamine + phosphate. The protein operates within cell wall biogenesis; peptidoglycan biosynthesis. Its function is as follows. Cell wall formation. Adds enolpyruvyl to UDP-N-acetylglucosamine. In Azotobacter vinelandii (strain DJ / ATCC BAA-1303), this protein is UDP-N-acetylglucosamine 1-carboxyvinyltransferase.